The primary structure comprises 154 residues: Egg-lysin (154 aa).

Residues 1–18 (MKLLVLWVFAMMATVAMS) form the signal peptide.

In terms of assembly, monomer. Homodimer. Molecules associate into dimers and then rapidly dissociate again. Interacts (as a monomer) with the egg vitelline layer protein VERL (via VERL repeats); each VERL chain can bind multiple copies of lysin. Sperm.

Its subcellular location is the cytoplasmic vesicle. The protein localises to the secretory vesicle. It is found in the acrosome lumen. Creates a 3 um hole in the egg vitelline layer through which the sperm passes. Does not have enzyme activity. Species-specific interaction between the sperm protein lysin and the egg protein VERL exposes a basic surface on lysin that may dissociate the egg vitelline layer via electrostatic repulsion. Plays a role in ensuring species-specific fertilization. In Haliotis fulgens (Green abalone), this protein is Egg-lysin.